The chain runs to 103 residues: MMNAVPISWFLTLSAILFALGVAGFLFRRNIITVFMSIELMLNAVNLSFVTFSYQHKEVAGHLFTFFVMVVAAAEAAVGLAIILTVFKNRSTLNIDDVNSMKN.

A run of 3 helical transmembrane segments spans residues 7 to 27 (ISWF…GFLF), 31 to 51 (IITV…SFVT), and 63 to 83 (LFTF…LAII).

This sequence belongs to the complex I subunit 4L family. In terms of assembly, NDH-1 is composed of 14 different subunits. Subunits NuoA, H, J, K, L, M, N constitute the membrane sector of the complex.

The protein localises to the cell inner membrane. It carries out the reaction a quinone + NADH + 5 H(+)(in) = a quinol + NAD(+) + 4 H(+)(out). Its function is as follows. NDH-1 shuttles electrons from NADH, via FMN and iron-sulfur (Fe-S) centers, to quinones in the respiratory chain. The immediate electron acceptor for the enzyme in this species is believed to be ubiquinone. Couples the redox reaction to proton translocation (for every two electrons transferred, four hydrogen ions are translocated across the cytoplasmic membrane), and thus conserves the redox energy in a proton gradient. This Solibacter usitatus (strain Ellin6076) protein is NADH-quinone oxidoreductase subunit K 1.